A 204-amino-acid chain; its full sequence is Small ribosomal subunit protein uS7 (204 aa).

Met1 carries the N-acetylmethionine modification. Residue Thr2 is modified to N-acetylthreonine; in 40S ribosomal protein S5, N-terminally processed. The residue at position 14 (Thr14) is a Phosphothreonine. Lys47 is subject to N6-acetyllysine; alternate. Residue Lys47 forms a Glycyl lysine isopeptide (Lys-Gly) (interchain with G-Cter in SUMO2); alternate linkage. Ser142 bears the Phosphoserine mark.

This sequence belongs to the universal ribosomal protein uS7 family. Component of the small ribosomal subunit. Part of the small subunit (SSU) processome, composed of more than 70 proteins and the RNA chaperone small nucleolar RNA (snoRNA) U3.

The protein localises to the cytoplasm. It localises to the nucleus. The protein resides in the nucleolus. In terms of biological role, component of the small ribosomal subunit. The ribosome is a large ribonucleoprotein complex responsible for the synthesis of proteins in the cell. Part of the small subunit (SSU) processome, first precursor of the small eukaryotic ribosomal subunit. During the assembly of the SSU processome in the nucleolus, many ribosome biogenesis factors, an RNA chaperone and ribosomal proteins associate with the nascent pre-rRNA and work in concert to generate RNA folding, modifications, rearrangements and cleavage as well as targeted degradation of pre-ribosomal RNA by the RNA exosome. This chain is Small ribosomal subunit protein uS7 (Rps5), found in Mus musculus (Mouse).